Consider the following 91-residue polypeptide: Putative regulatory protein Cyan7425_4125 (91 aa).

It belongs to the RemA family.

The protein is Putative regulatory protein Cyan7425_4125 of Cyanothece sp. (strain PCC 7425 / ATCC 29141).